Consider the following 509-residue polypeptide: MDTETLCLITADSGKVYGILKAIFGDESEIVKKLIDFDVSIRVVPLNLGLLNIFRDNAADLDNADLMKRRFGNTMGSRIVEAYRRSQDSKYKRNVCKTTGLLVCLFGGGLGLSREADKHKKFVEGKSHNILSVEMLKRALSIGGQNVDANKISSFWFATYTIFTTVYSPRLRYQAGSSKRIIALSESRNQYRSNLFWDLRDDSSHEVMSMVHVLSALFASALTAYISTRVAHELTQGNDERESLNNVLVWLKTLTFEPSTIALIAYIWLVSPTDAQATITIGSVMESESSDDFPDIVKILSYTSNTMLPVQLLEDGRTAYCSVADGYTTHTTALTLITDYNSSHMSDKFGVLINIVKFEHAYALHYVHHKPRDGKEMTITSPSSEMMFTSVVVTPLSSYPLIHARNAVIDWLRTFVHMFPDSGSLVIPADSYTWIHNLAQDMFPWVRLSTTLDIRDDHYFQVLCDCLSLEHDSRNHTKVEKLIKYMKASVYNFTSEARGNMLLAITVYK.

The protein resides in the host cell junction. Its subcellular location is the host plasmodesma. It localises to the host cytoplasm. Functionally, transports viral genome to neighboring plant cells directly through plasmosdesmata, without any budding. The movement protein allows efficient cell to cell propagation, by bypassing the host cell wall barrier. Increases virus accumulation and symptom severity. The chain is Movement protein from Rice dwarf virus (isolate Akita) (RDV).